Here is a 185-residue protein sequence, read N- to C-terminus: Biofilm operon icaADBC HTH-type negative transcriptional regulator IcaR (185 aa).

The 59-residue stretch at 1-59 (MKDKIIDNAITLFSEKGYDGTTLDDISKSVNIKKASLYYHYDNKEEIYRKSVENCFNYF) folds into the HTH tetR-type domain. The segment at residues 22–41 (TLDDISKSVNIKKASLYYHY) is a DNA-binding region (H-T-H motif).

As to quaternary structure, homodimer.

Functionally, represses transcription of the icaADBC operon necessary for biofilm production. The sequence is that of Biofilm operon icaADBC HTH-type negative transcriptional regulator IcaR (icaR) from Staphylococcus epidermidis (strain ATCC 35984 / DSM 28319 / BCRC 17069 / CCUG 31568 / BM 3577 / RP62A).